The primary structure comprises 311 residues: Glutaminase (311 aa).

Substrate-binding residues include Ser66, Asn116, Glu162, Asn169, Tyr193, Tyr245, and Val263.

The protein belongs to the glutaminase family. As to quaternary structure, homotetramer.

The enzyme catalyses L-glutamine + H2O = L-glutamate + NH4(+). This is Glutaminase from Rhodopseudomonas palustris (strain BisB5).